We begin with the raw amino-acid sequence, 206 residues long: LexA repressor (206 aa).

A DNA-binding region (H-T-H motif) is located at residues 28–48 (VREIGEAVGLASSSTVHGHLD). Residues serine 128 and lysine 166 each act as for autocatalytic cleavage activity in the active site.

Belongs to the peptidase S24 family. In terms of assembly, homodimer.

It catalyses the reaction Hydrolysis of Ala-|-Gly bond in repressor LexA.. Represses a number of genes involved in the response to DNA damage (SOS response), including recA and lexA. In the presence of single-stranded DNA, RecA interacts with LexA causing an autocatalytic cleavage which disrupts the DNA-binding part of LexA, leading to derepression of the SOS regulon and eventually DNA repair. The protein is LexA repressor of Exiguobacterium sp. (strain ATCC BAA-1283 / AT1b).